The primary structure comprises 337 residues: Peroxisome biogenesis factor 10 (337 aa).

The Peroxisomal matrix portion of the chain corresponds to 1–24; that stretch reads MKNDNKLQKEALMRLSQLRFPFAD. Residues 25-54 form a helical membrane-spanning segment; sequence APSIVQAHQKDEQIQGLLIMKVTELCKLIK. Position 55 (serine 55) is a topological domain, cytoplasmic. A helical transmembrane segment spans residues 56-77; that stretch reads QLFVNSYPKELSIFAKLLYLLF. Topologically, residues 78 to 105 are peroxisomal matrix; the sequence is TTGRRGRTLGEEYVDLTYTNRKGTRLAG. The helical transmembrane segment at 106-138 threads the bilayer; that stretch reads RLKMIVFAFAYPLCPYFITKLYKKIMKNNKESK. At 139–145 the chain is on the cytoplasmic side; sequence IEDTESV. The chain crosses the membrane as a helical span at residues 146 to 166; the sequence is AAFCKGLLDFILDVHMTLFYF. Over 167–202 the chain is Peroxisomal matrix; that stretch reads KGAFYSISKRIFGMRYVFKHILSKNEANFREEGSQK. The helical transmembrane segment at 203 to 222 threads the bilayer; the sequence is YKVLGYILLAQNVMKWYPVL. The Cytoplasmic segment spans residues 223–337; sequence TSTLGSWIYG…QPQEILVLRQ (115 aa). The Zn(2+) site is built by cysteine 286, cysteine 289, cysteine 301, histidine 303, cysteine 306, cysteine 309, cysteine 320, and cysteine 323. The segment at 286–327 adopts an RING-type zinc-finger fold; that stretch reads CILCLMNMSDPSCAPCGHLFCWSCLMSWCKERPECPLCRQHC.

The protein belongs to the pex2/pex10/pex12 family. In terms of assembly, component of the PEX2-PEX10-PEX12 retrotranslocation channel, composed of PEX2, PEX10 and PEX12.

It localises to the peroxisome membrane. It catalyses the reaction S-ubiquitinyl-[E2 ubiquitin-conjugating enzyme]-L-cysteine + [acceptor protein]-L-lysine = [E2 ubiquitin-conjugating enzyme]-L-cysteine + N(6)-ubiquitinyl-[acceptor protein]-L-lysine.. It functions in the pathway protein modification; protein ubiquitination. With respect to regulation, the E3 ubiquitin-protein ligase activity is stimulated by PEX12. Its function is as follows. E3 ubiquitin-protein ligase component of a retrotranslocation channel required for peroxisome organization by mediating export of the PEX5 receptor from peroxisomes to the cytosol, thereby promoting PEX5 recycling. The retrotranslocation channel is composed of PEX2, PEX10 and PEX12; each subunit contributing transmembrane segments that coassemble into an open channel that specifically allows the passage of PEX5 through the peroxisomal membrane. PEX10 also regulates PEX5 recycling by acting as a E3 ubiquitin-protein ligase. When PEX5 recycling is compromised, PEX10 catalyzes polyubiquitination of PEX5 during its passage through the retrotranslocation channel, leading to its degradation. The polypeptide is Peroxisome biogenesis factor 10 (Saccharomyces cerevisiae (strain ATCC 204508 / S288c) (Baker's yeast)).